Here is a 380-residue protein sequence, read N- to C-terminus: Lipid-A-disaccharide synthase (380 aa).

The protein belongs to the LpxB family.

The enzyme catalyses a lipid X + a UDP-2-N,3-O-bis[(3R)-3-hydroxyacyl]-alpha-D-glucosamine = a lipid A disaccharide + UDP + H(+). It functions in the pathway bacterial outer membrane biogenesis; LPS lipid A biosynthesis. Functionally, condensation of UDP-2,3-diacylglucosamine and 2,3-diacylglucosamine-1-phosphate to form lipid A disaccharide, a precursor of lipid A, a phosphorylated glycolipid that anchors the lipopolysaccharide to the outer membrane of the cell. This is Lipid-A-disaccharide synthase from Rickettsia typhi (strain ATCC VR-144 / Wilmington).